A 1314-amino-acid chain; its full sequence is E3 ubiquitin-protein ligase RNF123 (1314 aa).

Residue alanine 2 is modified to N-acetylalanine. Residues 74–254 (VDNEEEESQG…VAFNFGSRPL (181 aa)) enclose the B30.2/SPRY domain. Serine 675 bears the Phosphoserine mark. Arginine 683 is subject to Asymmetric dimethylarginine. The segment at 968–974 (WILVRLW) is interaction with NFKB1. Zn(2+) contacts are provided by cysteine 1254, cysteine 1257, cysteine 1269, histidine 1271, cysteine 1274, cysteine 1277, cysteine 1288, and cysteine 1291. An RING-type zinc finger spans residues 1254–1292 (CPICYAHPISAVFQPCGHKSCKACINQHLMNNKDCFFCK).

As to quaternary structure, component of the KPC complex composed of RNF123/KPC1 and UBAC1/KPC2. Interacts with UBAC1 and CDKN1B via its N-terminal domain. Interacts with RIGI (via N-terminus) and IFIH1 (via N-terminus). Ubiquitinated, leading to its degradation. Deubiquitinated by USP19, thereby stimulating CDKN1B ubiquitin-dependent degradation.

It is found in the cytoplasm. It carries out the reaction S-ubiquitinyl-[E2 ubiquitin-conjugating enzyme]-L-cysteine + [acceptor protein]-L-lysine = [E2 ubiquitin-conjugating enzyme]-L-cysteine + N(6)-ubiquitinyl-[acceptor protein]-L-lysine.. Its pathway is protein modification; protein ubiquitination. Its function is as follows. Catalytic subunit of the KPC complex that acts as E3 ubiquitin-protein ligase. Promotes the ubiquitination and proteasome-mediated degradation of CDKN1B which is the cyclin-dependent kinase inhibitor at the G0-G1 transition of the cell cycle. Also acts as a key regulator of the NF-kappa-B signaling by promoting maturation of the NFKB1 component of NF-kappa-B: acts by catalyzing ubiquitination of the NFKB1 p105 precursor, leading to limited proteasomal degradation of NFKB1 p105 and generation of the active NFKB1 p50 subunit. Also functions as an inhibitor of innate antiviral signaling mediated by RIGI and IFIH1 independently of its E3 ligase activity. Interacts with the N-terminal CARD domains of RIGI and IFIH1 and competes with the downstream adapter MAVS. This Homo sapiens (Human) protein is E3 ubiquitin-protein ligase RNF123.